A 257-amino-acid chain; its full sequence is UPF0246 protein Shew185_1115 (257 aa).

It belongs to the UPF0246 family.

In Shewanella baltica (strain OS185), this protein is UPF0246 protein Shew185_1115.